The chain runs to 244 residues: Lipoprotein-releasing system ATP-binding protein LolD (244 aa).

The 226-residue stretch at 19–244 (IRAEALAKTY…KLRELAPSAV (226 aa)) folds into the ABC transporter domain. Residue 55-62 (GASGAGKS) coordinates ATP.

Belongs to the ABC transporter superfamily. Lipoprotein translocase (TC 3.A.1.125) family. In terms of assembly, the complex is composed of two ATP-binding proteins (LolD) and two transmembrane proteins (LolC and LolE).

Its subcellular location is the cell inner membrane. In terms of biological role, part of the ABC transporter complex LolCDE involved in the translocation of mature outer membrane-directed lipoproteins, from the inner membrane to the periplasmic chaperone, LolA. Responsible for the formation of the LolA-lipoprotein complex in an ATP-dependent manner. This Xanthomonas axonopodis pv. citri (strain 306) protein is Lipoprotein-releasing system ATP-binding protein LolD.